The sequence spans 205 residues: Rho-related GTP-binding protein RhoQ (205 aa).

Residue 16–23 (GDGAVGKT) participates in GTP binding. An Effector region motif is present at residues 38-46 (YVPTVFDHY). GTP is bound by residues 63–67 (DTAGQ) and 121–124 (TQID). At cysteine 202 the chain carries Cysteine methyl ester. Cysteine 202 carries the S-farnesyl cysteine lipid modification. The propeptide at 203 to 205 (LIT) is removed in mature form.

It belongs to the small GTPase superfamily. Rho family. Interacts with CDC42EP4 in a GTP-dependent manner. Interacts with ARHGAP33/TCGAP. Interacts with CDC42EP1, CDC42EP2, CDC42EP3, PARD6A, PARD6G (and probably PARD6B) in a GTP-dependent manner. Part of a quaternary complex containing PARD3, some PARD6 protein (PARD6A, PARD6B or PARD6G) and some atypical PKC protein (PRKCI or PRKCZ). Interacts with EXO70 in a GTP-dependent manner. Interacts with GOPC. May be post-translationally modified by both palmitoylation and polyisoprenylation.

It localises to the cytoplasm. The protein localises to the cell membrane. Regulated by guanine nucleotide exchange factors (GEFs) which promote the exchange of bound GDP for free GTP, GTPase activating proteins (GAPs) which increase the GTP hydrolysis activity, and GDP dissociation inhibitors which inhibit the dissociation of the nucleotide from the GTPase. Its function is as follows. Plasma membrane-associated small GTPase which cycles between an active GTP-bound and an inactive GDP-bound state. In active state binds to a variety of effector proteins to regulate cellular responses. Involved in epithelial cell polarization processes. May play a role in CFTR trafficking to the plasma membrane. Causes the formation of thin, actin-rich surface projections called filopodia. This Homo sapiens (Human) protein is Rho-related GTP-binding protein RhoQ (RHOQ).